The following is a 382-amino-acid chain: Lipid-A-disaccharide synthase (382 aa).

This sequence belongs to the LpxB family.

The enzyme catalyses 2-N,3-O-bis[(3R)-3-hydroxytetradecanoyl]-alpha-D-glucosaminyl 1-phosphate + UDP-2-N,3-O-bis[(3R)-3-hydroxytetradecanoyl]-alpha-D-glucosamine = lipid A disaccharide (E. coli) + UDP + H(+). The catalysed reaction is a lipid X + a UDP-2-N,3-O-bis[(3R)-3-hydroxyacyl]-alpha-D-glucosamine = a lipid A disaccharide + UDP + H(+). It functions in the pathway glycolipid biosynthesis; lipid IV(A) biosynthesis; lipid IV(A) from (3R)-3-hydroxytetradecanoyl-[acyl-carrier-protein] and UDP-N-acetyl-alpha-D-glucosamine: step 5/6. Its function is as follows. Condensation of UDP-2,3-diacylglucosamine and 2,3-diacylglucosamine-1-phosphate to form lipid A disaccharide, a precursor of lipid A, a phosphorylated glycolipid that anchors the lipopolysaccharide to the outer membrane of the cell. This Shigella boydii serotype 18 (strain CDC 3083-94 / BS512) protein is Lipid-A-disaccharide synthase.